Consider the following 287-residue polypeptide: Ribosomal RNA small subunit methyltransferase I (287 aa).

It belongs to the methyltransferase superfamily. RsmI family.

It is found in the cytoplasm. It catalyses the reaction cytidine(1402) in 16S rRNA + S-adenosyl-L-methionine = 2'-O-methylcytidine(1402) in 16S rRNA + S-adenosyl-L-homocysteine + H(+). Its function is as follows. Catalyzes the 2'-O-methylation of the ribose of cytidine 1402 (C1402) in 16S rRNA. This Streptococcus pyogenes serotype M6 (strain ATCC BAA-946 / MGAS10394) protein is Ribosomal RNA small subunit methyltransferase I.